We begin with the raw amino-acid sequence, 197 residues long: Probable GTP-binding protein EngB (197 aa).

An EngB-type G domain is found at 22-195 (ELPEVALAGR…WKAIYALITE (174 aa)). Residues 30 to 37 (GRSNVGKS), 57 to 61 (GKTQT), 75 to 78 (DVPG), 142 to 145 (TKLD), and 174 to 176 (FSA) contribute to the GTP site. Positions 37 and 59 each coordinate Mg(2+).

This sequence belongs to the TRAFAC class TrmE-Era-EngA-EngB-Septin-like GTPase superfamily. EngB GTPase family. It depends on Mg(2+) as a cofactor.

Necessary for normal cell division and for the maintenance of normal septation. This is Probable GTP-binding protein EngB from Exiguobacterium sp. (strain ATCC BAA-1283 / AT1b).